The following is a 359-amino-acid chain: Mitochondrial glutathione transporter SLC25A39 (359 aa).

Over 1–14 the chain is Mitochondrial intermembrane; it reads MDDQDPGGISPLQQ. Solcar repeat units lie at residues 9–151, 159–243, and 253–347; these read ISPL…LKAF, SDLY…VKSQ, and TSVG…GKSF. The helical transmembrane segment at 15–35 threads the bilayer; the sequence is MVASGAGAVVTSLFMTPLDVV. At 36–121 the chain is on the mitochondrial matrix side; sequence KVRLQSQRPT…VKIVRHEGTR (86 aa). 4 residues coordinate [2Fe-2S] cluster: Cys74, Cys78, Cys88, and Cys94. Residues 122 to 142 traverse the membrane as a helical segment; the sequence is TLWSGLPATLVMTVPATAIYF. The Mitochondrial intermembrane portion of the chain corresponds to 143 to 164; that stretch reads TAYDQLKAFLCGQSLTSDLYAP. A helical membrane pass occupies residues 165–185; it reads MVAGALARMGTVTVVSPLELV. Topologically, residues 186-214 are mitochondrial matrix; that stretch reads RTKLQAQHVSYRELAACVQAAVAQGGWRS. A helical transmembrane segment spans residues 215 to 235; sequence LWLGWGPTALRDVPFSALYWF. The Mitochondrial intermembrane segment spans residues 236–255; that stretch reads NYELVKSQLNGPRQKEQTSV. The chain crosses the membrane as a helical span at residues 256–276; that stretch reads GISFVAGGISGMVAATLTLPF. Residues 277–317 are Mitochondrial matrix-facing; it reads DVVKTQRQMSLGAVEAMRVKPPRVDSTWLLLRRIQAESGTR. The helical transmembrane segment at 318-338 threads the bilayer; sequence GLFAGFLPRIIKAAPSCAIMI. At 339 to 359 the chain is on the mitochondrial intermembrane side; it reads STYEFGKSFFHRLNQEQPLGH.

This sequence belongs to the mitochondrial carrier (TC 2.A.29) family. Cleaved and degraded by AFG3L2; degradation by AFG3L2 is regulated by the ability of SLC25A39 to bind iron-sulfur. In absence of mitochondrial glutathione, SLC25A39 binds iron-sulfur, preventing cleavage and degradation by AFG3L2. The presence of mitochondrial glutathione prevents iron-sulfur-binding to SLC25A39, promoting cleavage and degradation by AFG3L2.

It localises to the mitochondrion inner membrane. It catalyses the reaction glutathione(in) = glutathione(out). The activity of SLC25A39 is regulated by levels of mitochondrial glutathione via its ability to bind [2Fe-2S] iron-sulfur cluster. Upon physiological levels of mitochondrial glutathione, glutathione prevents iron-sulfur-binding to SLC25A39 promoting cleavage and degradation by AFG3L2. Upon depletion of mitochondrial glutathione, SLC25A39 binds iron-sulfur, preventing cleavage and degradation by AFG3L2. Its function is as follows. Mitochondrial transporter required for glutathione import into mitochondria. Glutathione, which plays key roles in oxidative metabolism, is produced exclusively in the cytosol and is imported in many organelles. Mitochondrial glutathione is required for the activity and stability of proteins containing iron-sulfur clusters, as well as erythropoiesis. The protein is Mitochondrial glutathione transporter SLC25A39 (Slc25a39) of Rattus norvegicus (Rat).